The chain runs to 574 residues: Fusion glycoprotein F0 (574 aa).

A signal peptide spans 1–25 (MATTAMRMIISIIFISTYVTHITLC). The Extracellular segment spans residues 26-524 (QNITEEFYQS…SVDVGKSTTN (499 aa)). N-linked (GlcNAc...) asparagine; by host glycosylation is found at asparagine 27 and asparagine 70. 7 cysteine pairs are disulfide-bonded: cysteine 37–cysteine 439, cysteine 69–cysteine 212, cysteine 313–cysteine 343, cysteine 322–cysteine 333, cysteine 358–cysteine 367, cysteine 382–cysteine 393, and cysteine 416–cysteine 422. Residues 76–96 (VKLIKQELERYNNAVVELQSL) are a coiled coil. Asparagine 120 is a glycosylation site (N-linked (GlcNAc...) asparagine; by host). Positions 137 to 157 (FLGFLLGIGSAIASGVAVSKV) are fusion peptide. Positions 158-209 (LHLEGEVNKIKNALLSTNKAVVSLSNGVSVLTSKVLDLKNYIDKELLPKVNN) form a coiled coil. Positions 481–516 (LVFPSDEFDASIAQVNAKINQSLAFIRRSDELLHSV) form a coiled coil. N-linked (GlcNAc...) asparagine; by host glycosylation is present at asparagine 500. A helical transmembrane segment spans residues 525–550 (VVITTIIIVIVVVILMLIAVGLLFYS). The Cytoplasmic portion of the chain corresponds to 551-574 (KTRSTPIMLGKDQLSGINNLSFSK).

The protein belongs to the paramyxoviruses fusion glycoprotein family. As to quaternary structure, homotrimer. Heterodimer with fusion protein F2; disulfide-linked. Part of a complex composed of F1, F2 and G glycoproteins. As a heterodimer with F2, interacts with host RHOA; this interaction facilitates virus-induced syncytium formation. Homotrimer. Heterodimer with fusion protein F1; disulfide-linked. Part of a complex composed of F1, F2 and G glycoproteins. As a heterodimer with F1, interacts with host RHOA; this interaction facilitates virus-induced syncytium formation. The F glycoprotein is synthesized as a F0 inactive precursor that is heavily N-glycosylated and processed at two sites by a host furin-like protease probably in the Golgi. The cleavage site between p27 and F1 may occur after endocytosis to yield the mature F1 and F2 proteins. Both cleavages are required for membrane fusion and p27 is released from the processed protein.

The protein resides in the host Golgi apparatus membrane. The protein localises to the virion membrane. Its subcellular location is the host cell membrane. Functionally, inactive precursor that is cleaved at two sites by a furin-like protease to give rise to the mature F1 and F2 fusion glycoproteins. Class I viral fusion protein. Under the current model, the protein has at least 3 conformational states: pre-fusion native state, pre-hairpin intermediate state, and post-fusion hairpin state. During viral and plasma cell membrane fusion, the coiled coil regions assume a trimer-of-hairpins structure, positioning the fusion peptide in close proximity to the C-terminal region of the ectodomain. The formation of this structure appears to drive apposition and subsequent fusion of viral and cellular membranes leading to delivery of the nucleocapsid into the cytoplasm. This fusion is pH independent and occurs at the plasma or endosomal membrane. The trimer of F1-F2 (F protein) also facilitates the attachment and entry into the host cell. Later in infection, F protein expressed at the plasma membrane of infected cells can mediate fusion with adjacent cells to form syncytia, a cytopathic effect that could lead to tissue necrosis. Its function is as follows. Major determinant of the species specificity of RSV infection. The trimer of F1-F2 (F protein) also facilitates the attachment and entry into the host cell. Later in infection, F protein expressed at the plasma membrane of infected cells can mediate fusion with adjacent cells to form syncytia, a cytopathic effect that could lead to tissue necrosis. In Bos taurus (Bovine), this protein is Fusion glycoprotein F0 (F).